Here is a 66-residue protein sequence, read N- to C-terminus: Large ribosomal subunit protein uL29 (66 aa).

It belongs to the universal ribosomal protein uL29 family. In terms of assembly, part of the 50S ribosomal subunit.

The chain is Large ribosomal subunit protein uL29 (rpmC) from Bacillus subtilis (strain 168).